A 108-amino-acid chain; its full sequence is MSDAILYVSDDSFETDVLKSSKPVLVDFWAEWCGPCKMIAPILEEIADEYADRLRVAKFNIDENPNTPPQYAIRGIPTLLLFKAGKLEATKVGALSKAQLTAFLDSQL.

Residues 2 to 108 form the Thioredoxin domain; that stretch reads SDAILYVSDD…QLTAFLDSQL (107 aa). The cysteines at positions 33 and 36 are disulfide-linked.

This sequence belongs to the thioredoxin family.

Component of the thioredoxin-thioredoxin reductase system. Participates in various redox reactions through the reversible oxidation of its active center dithiol to a disulfide and catalyzes dithiol-disulfide exchange reactions. This chain is Thioredoxin (trxA), found in Acidithiobacillus ferridurans.